The sequence spans 156 residues: MYALDFLFIAFVYFAACHIQEKPVRAQEVQLPPGQECQMTPVIHILKHRGCKPKAIPSFACIGKCTSYVQVSGSKIWQMERTCNCCQEAGEREATVVLYCPDAKNEERRFRKVSTKAPLECMCRPCGSIEESAIIPQEVAGYAEEGPLYNHFRKSF.

The signal sequence occupies residues 1 to 26 (MYALDFLFIAFVYFAACHIQEKPVRA). 5 cysteine pairs are disulfide-bonded: Cys37/Cys86, Cys51/Cys100, Cys61/Cys121, Cys65/Cys123, and Cys83/Cys126. In terms of domain architecture, CTCK spans 37–127 (CQMTPVIHIL…PLECMCRPCG (91 aa)).

Heterodimer of burs and pburs.

The protein resides in the secreted. Its function is as follows. Final heterodimeric neurohormone released at the end of the molting cycle, involved in the sclerotization (tanning) of the insect cuticle, melanization and wing spreading. This chain is Bursicon, found in Manduca sexta (Tobacco hawkmoth).